We begin with the raw amino-acid sequence, 274 residues long: MGIRKLKPTTPGQRHKVIGAFDKITASTPEKSLVVGKKSTGGRNNTGKMTMRYIGGGHKQKYRIIDFKRNKDGIPATVKSIEYDPNRSSRIALLYYADGAKSYIIAPNGLEVGQTVVSGSDAAPEVGNTLPMANIPVGTIIHNIELRPGQGAKMVRSAGAFAQLTSKEGAYAIIKMPSGETRKILAACKATIGAVGNSDHALEKSGKAGRSRWLGRRPRNRGVVMNPVDHPMGGGEGRSSGGHPRSRNGLYAKGLKTRAPKKHSSKYIIERRKK.

Residues 200-274 (HALEKSGKAG…SKYIIERRKK (75 aa)) form a disordered region. Composition is skewed to basic residues over residues 207–220 (KAGRSRWLGRRPRN) and 255–274 (LKTRAPKKHSSKYIIERRKK).

The protein belongs to the universal ribosomal protein uL2 family. In terms of assembly, part of the 50S ribosomal subunit. Forms a bridge to the 30S subunit in the 70S ribosome.

In terms of biological role, one of the primary rRNA binding proteins. Required for association of the 30S and 50S subunits to form the 70S ribosome, for tRNA binding and peptide bond formation. It has been suggested to have peptidyltransferase activity; this is somewhat controversial. Makes several contacts with the 16S rRNA in the 70S ribosome. The protein is Large ribosomal subunit protein uL2 of Parabacteroides distasonis (strain ATCC 8503 / DSM 20701 / CIP 104284 / JCM 5825 / NCTC 11152).